We begin with the raw amino-acid sequence, 183 residues long: Apo-citrate lyase phosphoribosyl-dephospho-CoA transferase (183 aa).

This sequence belongs to the CitX family.

The enzyme catalyses apo-[citrate lyase ACP] + 2'-(5''-triphospho-alpha-D-ribosyl)-3'-dephospho-CoA = holo-[citrate lyase ACP] + diphosphate. Its function is as follows. Transfers 2-(5''-triphosphoribosyl)-3'-dephosphocoenzyme-A on a serine residue to the apo-acyl carrier protein (gamma chain) of the citrate lyase to yield holo-acyl carrier protein. The polypeptide is Apo-citrate lyase phosphoribosyl-dephospho-CoA transferase (Escherichia coli (strain SMS-3-5 / SECEC)).